A 65-amino-acid polypeptide reads, in one-letter code: Large ribosomal subunit protein bL35 (65 aa).

The protein belongs to the bacterial ribosomal protein bL35 family.

The polypeptide is Large ribosomal subunit protein bL35 (Phytoplasma mali (strain AT)).